The primary structure comprises 182 residues: MAQKVILGAEDIRRTLARIAHEILERNQSSRDLVIIGMYTRGVPLANRLAENILRFEGLEIPVGTLDFSLYRDDLDSQRFHPTIKNTDIPFSINNKIVVLVDDVLFTGRSTRAAMDALIDYGRPKAIQLAVLVDRGHRELPVRADYIGKNIPSARDEKIKVRLTETDGQDEVLILDDEAGEV.

The PRPP-binding motif lies at 98–110 (VVLVDDVLFTGRS).

Belongs to the purine/pyrimidine phosphoribosyltransferase family. PyrR subfamily.

The catalysed reaction is UMP + diphosphate = 5-phospho-alpha-D-ribose 1-diphosphate + uracil. In terms of biological role, regulates the transcription of the pyrimidine nucleotide (pyr) operon in response to exogenous pyrimidines. Functionally, also displays a weak uracil phosphoribosyltransferase activity which is not physiologically significant. The sequence is that of Bifunctional protein PyrR from Dehalococcoides mccartyi (strain ATCC BAA-2100 / JCM 16839 / KCTC 5957 / BAV1).